The sequence spans 209 residues: Pyridoxine/pyridoxamine 5'-phosphate oxidase (209 aa).

Substrate contacts are provided by residues Arg-7 to Tyr-10 and Lys-64. Residues Arg-59 to Lys-64, Phe-74 to Thr-75, Arg-80, and Lys-81 contribute to the FMN site. Substrate-binding residues include Tyr-121, Arg-125, and Ser-129. FMN is bound by residues Gln-138–Ser-139 and Trp-182. Arg-188–His-190 is a substrate binding site. Arg-192 provides a ligand contact to FMN.

Belongs to the pyridoxamine 5'-phosphate oxidase family. Homodimer. FMN is required as a cofactor.

The enzyme catalyses pyridoxamine 5'-phosphate + O2 + H2O = pyridoxal 5'-phosphate + H2O2 + NH4(+). It carries out the reaction pyridoxine 5'-phosphate + O2 = pyridoxal 5'-phosphate + H2O2. Its pathway is cofactor metabolism; pyridoxal 5'-phosphate salvage; pyridoxal 5'-phosphate from pyridoxamine 5'-phosphate: step 1/1. The protein operates within cofactor metabolism; pyridoxal 5'-phosphate salvage; pyridoxal 5'-phosphate from pyridoxine 5'-phosphate: step 1/1. In terms of biological role, catalyzes the oxidation of either pyridoxine 5'-phosphate (PNP) or pyridoxamine 5'-phosphate (PMP) into pyridoxal 5'-phosphate (PLP). This Actinobacillus pleuropneumoniae serotype 7 (strain AP76) protein is Pyridoxine/pyridoxamine 5'-phosphate oxidase.